The primary structure comprises 490 residues: AP-5 complex subunit mu-1 (490 aa).

The MHD domain maps to 206–476 (KAQISISITE…LISSDYYIWN (271 aa)).

This sequence belongs to the adaptor complexes medium subunit family. As to quaternary structure, probably part of the adaptor protein complex 5 (AP-5) a tetramer composed of AP5B1, AP5M1, AP5S1 and AP5Z1. As to expression, widely expressed, including in small intestine and testis. In small intestine, highly expressed in cytoplasm of villi epithelial cells and internal glands. In testis, selectively expressed in maturing sperm cells (at protein level).

It localises to the cytoplasm. The protein localises to the cytosol. It is found in the late endosome membrane. Its subcellular location is the lysosome membrane. As part of AP-5, a probable fifth adaptor protein complex it may be involved in endosomal transport. This chain is AP-5 complex subunit mu-1 (Ap5m1), found in Mus musculus (Mouse).